The following is a 238-amino-acid chain: MRPAGRSNNQVRPVTLTRNYTKHAEGSVLVEFGDTKVLCTASIEEGVPRFLKGQGQGWITAEYGMLPRSTHTRNAREAAKGKQGGRTMEIQRLIARALRAAVDLKALGEFTITLDCDVLQADGGTRTASITGACVALVDALQKLVENGKLKTNPMKGMVAAVSVGIVNGEAVCDLEYVEDSAAETDMNVVMTEDGRIIEVQGTAEGEPFTHEELLILLALARGGIESIVATQKAALAN.

Phosphate is bound by residues R86 and 124–126 (GTR).

It belongs to the RNase PH family. Homodimer. Has a tendency to aggregate into multimers. Requires Mg(2+) as cofactor.

The enzyme catalyses tRNA(n+1) + phosphate = tRNA(n) + a ribonucleoside 5'-diphosphate. Its function is as follows. Phosphorolytic exoribonuclease that plays an important role in tRNA 3'-end maturation; has no activity on a tRNA precursor with a 3'-terminal phosphate group. In vitro is freely reversible, adds nucleotides to the ends of RNA molecules by using nucleoside diphosphates as substrates, but this may not be physiologically important. Probably plays a role in initiation of 16S rRNA degradation (leading to ribosome degradation) during starvation. This chain is Ribonuclease PH, found in Escherichia coli (strain K12 / MC4100 / BW2952).